We begin with the raw amino-acid sequence, 156 residues long: Ribosome maturation factor RimP (156 aa).

It belongs to the RimP family.

The protein resides in the cytoplasm. In terms of biological role, required for maturation of 30S ribosomal subunits. This is Ribosome maturation factor RimP from Synechococcus sp. (strain JA-2-3B'a(2-13)) (Cyanobacteria bacterium Yellowstone B-Prime).